The sequence spans 450 residues: MLVTAYLSFVGLLASCLGLELSRCRARPPGRACSNPSFLQFQLDFYQVYFLALAADWLQAPYLYKLYQHYHFLEGQIAILYVCGLASTVLFGLVASSLVDWLGRKKSCVLFSLTYSLCCITKLSQDYFVLLVGRALGGLSTALLFSAFEAWYIHEHVERHDFPAEWIPATFARAAFWNHVLAVAAGVAAEAVASWIGLGPVAPFVAAIPLLALTGALALRNWGENYDRQRAFSKTCAGGLRCLLSDRRVLLLGVIQALFESVIFIFVFLWTPVLDPHGAPLGIVFSSFMAASLLGSSLYRIATSKRYHLQPMHLLSLAVLIVVFSLFMLTFSTSPGQENPVESFIAFLLIELACGLYFPSMSFLRRKVIPETEQAGVLNWFRVPLHLLACLGLLVLHDSDRKTGTRNMFSICSAVMVTTLLAVAGLFTVVRHDAELRVPSPTGEPYAPEL.

12 helical membrane-spanning segments follow: residues 1-21, 38-58, 79-99, 128-148, 167-187, 191-211, 249-269, 278-298, 311-331, 344-364, 376-396, and 409-429; these read MLVT…GLEL, FLQF…ADWL, ILYV…SSLV, FVLL…FSAF, IPAT…AAGV, AVAS…IPLL, VLLL…FVFL, GAPL…GSSL, PMHL…MLTF, FIAF…MSFL, GVLN…LLVL, and FSIC…LFTV.

The protein belongs to the major facilitator superfamily.

Its subcellular location is the cell membrane. Functionally, mediates high-affinity intracellular uptake of the rare oligo-element molybdenum. In Mus musculus (Mouse), this protein is Molybdate-anion transporter (Mfsd5).